The sequence spans 1494 residues: Neuropathy target esterase sws (1494 aa).

Residues Met1 to Thr35 lie on the Lumenal side of the membrane. The helical transmembrane segment at Met36 to Phe56 threads the bilayer. The Cytoplasmic portion of the chain corresponds to Lys57–Leu1494. An a nucleoside 3',5'-cyclic phosphate-binding site is contributed by Ile176–Arg303. Positions Ala362–Ala372 are enriched in low complexity. Disordered stretches follow at residues Ala362–Gly405 and Asn422–Val452. Residues Gly435–Gln449 show a composition bias toward polar residues. Residue Ser443 is modified to Phosphoserine. Residues Glu474 to Arg601 and Ile590 to Arg717 each bind a nucleoside 3',5'-cyclic phosphate. Residues Leu944 to Arg1110 enclose the PNPLA domain. The GXGXXG motif lies at Gly948–Gly953. Residues Gly975–Gly979 carry the GXSXG motif. Ser977 (nucleophile) is an active-site residue. The Proton acceptor role is filled by Asp1097. A DGA/G motif is present at residues Asp1097 to Gly1099. The tract at residues Met1367–Leu1494 is disordered. The segment covering Ala1370–Ala1381 has biased composition (polar residues). Composition is skewed to basic and acidic residues over residues Ser1389–Ser1420 and Met1452–Arg1483. Positions Ser1484–Leu1494 are enriched in polar residues.

This sequence belongs to the NTE family. As to quaternary structure, interacts with Pka-C3; interaction inhibits the catalytic function of Pka-C3 and the esterase activity of sws.

Its subcellular location is the endoplasmic reticulum membrane. The catalysed reaction is a 1-acyl-sn-glycero-3-phosphocholine + H2O = sn-glycerol 3-phosphocholine + a fatty acid + H(+). In terms of biological role, phospholipase B that deacylates intracellular phosphatidylcholine (PtdCho), generating glycerophosphocholine (GroPtdCho). This deacylation occurs at both sn-2 and sn-1 positions of PtdCho. Its specific chemical modification by certain organophosphorus (OP) compounds leads to distal axonopathy. Plays a role in the signaling mechanism between neurons and glia that regulates glia wrapping during development of the adult brain. Essential for membrane lipid homeostasis and cell survival in both neurons and glia of the adult brain. This Drosophila pseudoobscura pseudoobscura (Fruit fly) protein is Neuropathy target esterase sws.